A 229-amino-acid polypeptide reads, in one-letter code: 2-C-methyl-D-erythritol 4-phosphate cytidylyltransferase (229 aa).

The protein belongs to the IspD/TarI cytidylyltransferase family. IspD subfamily.

It catalyses the reaction 2-C-methyl-D-erythritol 4-phosphate + CTP + H(+) = 4-CDP-2-C-methyl-D-erythritol + diphosphate. It functions in the pathway isoprenoid biosynthesis; isopentenyl diphosphate biosynthesis via DXP pathway; isopentenyl diphosphate from 1-deoxy-D-xylulose 5-phosphate: step 2/6. In terms of biological role, catalyzes the formation of 4-diphosphocytidyl-2-C-methyl-D-erythritol from CTP and 2-C-methyl-D-erythritol 4-phosphate (MEP). This Neisseria gonorrhoeae (strain ATCC 700825 / FA 1090) protein is 2-C-methyl-D-erythritol 4-phosphate cytidylyltransferase.